A 540-amino-acid chain; its full sequence is Acyl-CoA synthetase 7 (540 aa).

ATP-binding positions include Ser186–Lys194, Asp415, Arg430, and Lys522. The Microbody targeting signal signature appears at Ala538–Leu540.

The protein belongs to the ATP-dependent AMP-binding enzyme family. Expressed in intestine.

Its subcellular location is the peroxisome. It catalyses the reaction nonanoate + ATP + CoA = nonanoyl-CoA + AMP + diphosphate. The catalysed reaction is IC-asc-C7 + ATP + CoA = IC-asc-C7-CoA + AMP + diphosphate. It carries out the reaction IC-asc-C9 + ATP + CoA = IC-asc-C9-CoA + AMP + diphosphate. Functionally, plays a role in ascaroside pheromones biosynthesis, which regulates development and behavior. Specifically, activates the side chain of medium-chain indol-3-carbonyl (IC)-ascarosides for shortening through beta-oxidation. Converts IC-asc-C7 and IC-asc-C9 into IC-asc-C7-CoA and IC-asc-C9-CoA, respectively. May play a role in fatty-acid metabolism by activating and converting nonanoate (C9) into nonanoyl-CoA (C9-CoA). The polypeptide is Acyl-CoA synthetase 7 (Caenorhabditis elegans).